The following is a 151-amino-acid chain: Large ribosomal subunit protein uL13 (151 aa).

This sequence belongs to the universal ribosomal protein uL13 family. In terms of assembly, part of the 50S ribosomal subunit.

Functionally, this protein is one of the early assembly proteins of the 50S ribosomal subunit, although it is not seen to bind rRNA by itself. It is important during the early stages of 50S assembly. This Microcystis aeruginosa (strain NIES-843 / IAM M-2473) protein is Large ribosomal subunit protein uL13.